We begin with the raw amino-acid sequence, 125 residues long: MORF4 family-associated protein 1 (125 aa).

The interval 76–99 (ESALNHLQGAGGAEPRGPRAEKAD) is disordered. The stretch at 94–124 (RAEKADEKAQEMAKMAEMLVQLVRRIEKSES) forms a coiled coil.

Belongs to the MORF4 family-associated protein family. In terms of assembly, found in a complex composed of MORF4L1, MRFAP1 and RB1. Interacts via its N-terminus with MORF4L1. Interacts with CSTB and MORF4L2.

It localises to the nucleus. The protein localises to the cytoplasm. Its subcellular location is the perinuclear region. The protein is MORF4 family-associated protein 1 of Rattus norvegicus (Rat).